We begin with the raw amino-acid sequence, 431 residues long: MIDITLLRKDLDAVLARLSARKNPQPFLDAERFRALEAERRTLQSSTEDLQARRNQLSKQIGHLKAKGGDVAPVMDEVGGIGDTLKAGAERLEQIQGELGLMLMHVPNLPQADVPVGADETANLEVRRWGSPREFDFTVRDHVDLGAPLGLDFETSAKLSGARFSFLKGPAARLHRALAQFMLDVQTQEHGYTECYTPYIVNREVLEGTGQLPKFKEDMFWVSRGGDETQPEQYLISTSEISLTNSVREQVLAADQLPIKLTAHSPCFRSEAGSAGRDTRGLIRQHQFDKVEMVQITTPEQSDAALESMVGHAEAVLQKLGLPYRVLLLSTGDMGFGSAKTYDLEVWVPAQATYREISSCSNCEAFQARRMQTRFKNAQGKNEFVHTLNGSGLAVGRTLVAVLENYQNADGSITVPEILRPYLGGLLELRA.

Residue 238–240 (TSE) coordinates L-serine. Residue 269-271 (RSE) coordinates ATP. Glutamate 292 lines the L-serine pocket. 356-359 (EISS) is a binding site for ATP. Residue serine 391 coordinates L-serine.

It belongs to the class-II aminoacyl-tRNA synthetase family. Type-1 seryl-tRNA synthetase subfamily. Homodimer. The tRNA molecule binds across the dimer.

The protein localises to the cytoplasm. The enzyme catalyses tRNA(Ser) + L-serine + ATP = L-seryl-tRNA(Ser) + AMP + diphosphate + H(+). It catalyses the reaction tRNA(Sec) + L-serine + ATP = L-seryl-tRNA(Sec) + AMP + diphosphate + H(+). Its pathway is aminoacyl-tRNA biosynthesis; selenocysteinyl-tRNA(Sec) biosynthesis; L-seryl-tRNA(Sec) from L-serine and tRNA(Sec): step 1/1. In terms of biological role, catalyzes the attachment of serine to tRNA(Ser). Is also able to aminoacylate tRNA(Sec) with serine, to form the misacylated tRNA L-seryl-tRNA(Sec), which will be further converted into selenocysteinyl-tRNA(Sec). This chain is Serine--tRNA ligase, found in Leptothrix cholodnii (strain ATCC 51168 / LMG 8142 / SP-6) (Leptothrix discophora (strain SP-6)).